We begin with the raw amino-acid sequence, 317 residues long: Taste receptor type 2 member 14 (317 aa).

Residues 1–7 (MGGVIKS) lie on the Extracellular side of the membrane. Residues 8–28 (IFTFVLIVEFIIGNLGNSFIA) traverse the membrane as a helical segment. Residues 29-55 (LVNCIDWVKGRKISSVDRILTALAISR) are Cytoplasmic-facing. The chain crosses the membrane as a helical span at residues 56–76 (ISLVWLIFGSWCVSVFFPALF). Over 77–87 (ATEKMFRMLTN) the chain is Extracellular. Cholesterol-binding residues include Thr-86 and Trp-89. A helical membrane pass occupies residues 88–108 (IWTVINHFSVWLATGLGTFYF). The Cytoplasmic portion of the chain corresponds to 109–129 (LKIANFSNSIFLYLKWRVKKV). Residues 130–150 (VLVLLLVTSVFLFLNIALINI) form a helical membrane-spanning segment. Topologically, residues 151–184 (HINASINGYRRNKTCSSDSSNFTRFSSLIVLTST) are extracellular. N-linked (GlcNAc...) asparagine glycosylation is found at Asn-153, Asn-162, and Asn-171. Cholesterol is bound at residue Val-180. The chain crosses the membrane as a helical span at residues 185–205 (VFIFIPFTLSLAMFLLLIFSM). Over 206–232 (WKHRKKMQHTVKISGDASTKAHRGVKS) the chain is Cytoplasmic. The chain crosses the membrane as a helical span at residues 233–253 (VITFFLLYAIFSLSFFISVWT). Topologically, residues 254-261 (SERLEENL) are extracellular. The chain crosses the membrane as a helical span at residues 262–282 (IILSQVMGMAYPSCHSCVLIL). Cholesterol-binding residues include Ser-265 and Met-268. Over 283–317 (GNKKLRQASLSVLLWLRYMFKDGEPSGHKEFRESS) the chain is Cytoplasmic.

The protein belongs to the G-protein coupled receptor T2R family. Core component of the TAS2R14-GNAI1 complex, consisting of TAS2R14, GNAI1, GNB1 and GNG2; within the complex interacts with GNAI1. Core component of the TAS2R14-GNAT3 complex, consisting of TAS2R14, GNAT3, GNB1 and GNG2; within the complex interacts with GNAT3. Core component of the TAS2R14-GNAS2 complex, consisting of TAS2R14, GNAS2, GNB1 and GNG2; within the complex interacts with GNAS2. As to expression, highly expressed in cerebellum, pancreas, small intestine and thymus; also expressed in adipose, aorta, skin and tongue, but at significantly lower levels. Expressed in subsets of taste receptor cells of the tongue and palate epithelium and exclusively in gustducin-positive cells. Expressed in testis.

It is found in the membrane. The catalysed reaction is Ca(2+)(in) = Ca(2+)(out). It catalyses the reaction 3',5'-cyclic AMP(in) = 3',5'-cyclic AMP(out). With respect to regulation, basal activity is enhanced by binding to bitter tastants, such as flufenamic acid and aristolochic acid. Regulated by cholesterol in a concentration-dependent manner. Functionally, gustducin-linked G-protein coupled receptor that plays a role in the perception of bitterness. The activity of this receptor stimulates GNAT3, activating the gustducin G-protein pathway. Likely plays a role in sensing the chemical composition of the gastrointestinal content and other extra-oral tissues via the inhibitory G-protein pathways. The protein is Taste receptor type 2 member 14 (TAS2R14) of Homo sapiens (Human).